Reading from the N-terminus, the 138-residue chain is RuBisCO chaperone RbcX (138 aa).

Positions Val-118–Ser-138 are disordered. The span at Pro-122–Ser-138 shows a compositional bias: polar residues.

It belongs to the RbcX family. Homodimer. Interacts with the exposed C-terminal peptide of RbcL via its central cleft, contacts a second RbcL monomer via its peripheral polar surface.

It is found in the carboxysome. The protein localises to the cytoplasm. Its function is as follows. An RbcL-specific chaperone. The central cleft of the RbcX homodimer (RbcX2) binds the C-terminus of an RbcL monomer, stabilizing the C-terminus and probably preventing its reassociation with chaperonin GroEL-ES. At the same time the peripheral region of RbcX2 binds a second RbcL monomer, bridging the RbcL homodimers in the correct orientation. The RbcX2(2)-bound RbcL dimers then assemble into the RbcL8 core (RbcL8-(RbcX2)8). RbcS binding triggers the release of RbcX2. This Synechocystis sp. (strain ATCC 27184 / PCC 6803 / Kazusa) protein is RuBisCO chaperone RbcX.